A 134-amino-acid chain; its full sequence is MARVKRGVTAHAKHKKTLKAAKGFYGRRKNTIRAAKAAVDRSKQYAYRDRKVNKRNFRALWIQRINAAVREFGLTYGRFIDGLNKAGIEVDRKVLSDMAIHEPAAFGALVEASKKALAYLKEAGTANEFESAVR.

It belongs to the bacterial ribosomal protein bL20 family.

Binds directly to 23S ribosomal RNA and is necessary for the in vitro assembly process of the 50S ribosomal subunit. It is not involved in the protein synthesizing functions of that subunit. This Sinorhizobium fredii (strain NBRC 101917 / NGR234) protein is Large ribosomal subunit protein bL20.